We begin with the raw amino-acid sequence, 223 residues long: UPF0758 protein HD_0732 (223 aa).

In terms of domain architecture, MPN spans 98 to 220; it reads TINTPHLAIM…YFSFEEERFH (123 aa). 3 residues coordinate Zn(2+): histidine 169, histidine 171, and aspartate 182. The JAMM motif signature appears at 169–182; sequence HNHPSGNCTASQAD.

It belongs to the UPF0758 family.

In Haemophilus ducreyi (strain 35000HP / ATCC 700724), this protein is UPF0758 protein HD_0732.